We begin with the raw amino-acid sequence, 216 residues long: Adenylate kinase (216 aa).

10 to 15 (GAGKGT) is an ATP binding site. Positions 30-59 (STGDMFRAAMKAETELGLQAKSFIDKGALV) are NMP. AMP is bound by residues T31, R36, 57-59 (ALV), 85-88 (GFPR), and Q92. The segment at 126-163 (GRRICKECGATYHLEFNPPAKADVCDKCGGELYQRSDD) is LID. R127 serves as a coordination point for ATP. Residues C130 and C133 each coordinate Zn(2+). An ATP-binding site is contributed by 136–137 (TY). C150 and C153 together coordinate Zn(2+). AMP is bound by residues R160 and R171. Residue Q199 participates in ATP binding.

This sequence belongs to the adenylate kinase family. Monomer.

The protein localises to the cytoplasm. It catalyses the reaction AMP + ATP = 2 ADP. It participates in purine metabolism; AMP biosynthesis via salvage pathway; AMP from ADP: step 1/1. Catalyzes the reversible transfer of the terminal phosphate group between ATP and AMP. Plays an important role in cellular energy homeostasis and in adenine nucleotide metabolism. The chain is Adenylate kinase from Bacillus mycoides (strain KBAB4) (Bacillus weihenstephanensis).